Reading from the N-terminus, the 354-residue chain is Virulence plasmid protein pGP2-D (354 aa).

In Chlamydia trachomatis serovar L2 (strain ATCC VR-902B / DSM 19102 / 434/Bu), this protein is Virulence plasmid protein pGP2-D.